We begin with the raw amino-acid sequence, 356 residues long: Ferrochelatase (356 aa).

Fe cation contacts are provided by H214 and E295.

This sequence belongs to the ferrochelatase family.

It is found in the cytoplasm. It carries out the reaction heme b + 2 H(+) = protoporphyrin IX + Fe(2+). The protein operates within porphyrin-containing compound metabolism; protoheme biosynthesis; protoheme from protoporphyrin-IX: step 1/1. In terms of biological role, catalyzes the ferrous insertion into protoporphyrin IX. This chain is Ferrochelatase, found in Paraburkholderia xenovorans (strain LB400).